A 369-amino-acid polypeptide reads, in one-letter code: Probable dual-specificity RNA methyltransferase RlmN (369 aa).

Glutamate 108 serves as the catalytic Proton acceptor. A Radical SAM core domain is found at 114–351; the sequence is YPDRATLCIS…LAQGVSCTVR (238 aa). A disulfide bridge connects residues cysteine 121 and cysteine 362. Cysteine 128, cysteine 132, and cysteine 135 together coordinate [4Fe-4S] cluster. S-adenosyl-L-methionine contacts are provided by residues 183–184, serine 217, 240–242, and asparagine 319; these read GE and SLH. The active-site S-methylcysteine intermediate is cysteine 362.

It belongs to the radical SAM superfamily. RlmN family. Requires [4Fe-4S] cluster as cofactor.

It localises to the cytoplasm. It catalyses the reaction adenosine(2503) in 23S rRNA + 2 reduced [2Fe-2S]-[ferredoxin] + 2 S-adenosyl-L-methionine = 2-methyladenosine(2503) in 23S rRNA + 5'-deoxyadenosine + L-methionine + 2 oxidized [2Fe-2S]-[ferredoxin] + S-adenosyl-L-homocysteine. The catalysed reaction is adenosine(37) in tRNA + 2 reduced [2Fe-2S]-[ferredoxin] + 2 S-adenosyl-L-methionine = 2-methyladenosine(37) in tRNA + 5'-deoxyadenosine + L-methionine + 2 oxidized [2Fe-2S]-[ferredoxin] + S-adenosyl-L-homocysteine. Its function is as follows. Specifically methylates position 2 of adenine 2503 in 23S rRNA and position 2 of adenine 37 in tRNAs. This is Probable dual-specificity RNA methyltransferase RlmN from Rhodococcus opacus (strain B4).